The sequence spans 478 residues: tRNA modification GTPase MnmE (478 aa).

Arginine 25, glutamate 82, and lysine 135 together coordinate (6S)-5-formyl-5,6,7,8-tetrahydrofolate. Residues 231 to 400 enclose the TrmE-type G domain; the sequence is GIKVVIAGQP…LREQLLRVVG (170 aa). K(+) is bound at residue asparagine 241. GTP-binding positions include 241 to 246, 260 to 266, and 285 to 288; these read NVGKSS, TPVAGTT, and DTAG. Serine 245 provides a ligand contact to Mg(2+). The K(+) site is built by threonine 260, valine 262, and threonine 265. Threonine 266 is a Mg(2+) binding site. (6S)-5-formyl-5,6,7,8-tetrahydrofolate is bound at residue lysine 478.

The protein belongs to the TRAFAC class TrmE-Era-EngA-EngB-Septin-like GTPase superfamily. TrmE GTPase family. In terms of assembly, homodimer. Heterotetramer of two MnmE and two MnmG subunits. K(+) serves as cofactor.

The protein localises to the cytoplasm. In terms of biological role, exhibits a very high intrinsic GTPase hydrolysis rate. Involved in the addition of a carboxymethylaminomethyl (cmnm) group at the wobble position (U34) of certain tRNAs, forming tRNA-cmnm(5)s(2)U34. This is tRNA modification GTPase MnmE from Polaromonas naphthalenivorans (strain CJ2).